Here is a 3053-residue protein sequence, read N- to C-terminus: MRRSKADVERYIASVQGSAPSPREKSMKGFYFAKLYYEAKEYDLAKKYISTYINVQERDPKAHRFLGLLYEVEENIDKAVECYKRSVELNPTQKDLVLKIAELLCKNDVTDGRAKYWVERAAKLFPGSPAIYKLKEQLLDCKGEDGWNKLFDLIQSELYARPDDIHVNIRLVELYRSNKRLKDAVAHCHEADRNTALRSSLEWNLCVVQTLKEYLESLQCLDSDKSTWRATNKDLLLAYANLMLLTLSTRDVQEGRELLESFDSALQSVKSSVGGNDELSATFLETKGHFYMHVGSLLLKMGQQSDIQWRALSELAALCYLVAFQVPRPKVKLIKGEAGQNLLETMAHDRLSQSGHMLLNLSRGKQDFLKEVVESFANKSGQSALCDALFSSQSSKERSFLGNDDIGNLDGQVPDPDDLARYDTGAVRAHNGSLQHLTWLGLQWNSLSTLPAIRKWLKQLFHHLPQETSRLETNAPESICILDLEVFLLGVIYTSHLQLKEKCNSHHTSYQPLCLPLPVCRQLCTERQKTWWDAVCTLIHRKALPGTSAKLRLLVQREINSLRGQEKHGLQPALLVHWAQSLQKTGSSLNSFYDQREYIGRSVHYWRKVLPLLKMIRKKNSIPEPIDPLFKHFHSVDIQASEIGEYEEDAHITFAILDAVNGNIEDAMTAFESIKNVVSYWNLALIFHRKAEDIENDALSPEEQEECKNYLRKTRDYLIRILDDSDSNTSVVQKLPVPLESVKEMLNSVMQELEDYSEGGTLYKNGCWRSADSELKHSTPSPTKYSLSPSKSYKYSPKTPPRWAEDQNSLLKMICQQVEAIKKEMQELKLNSNNSASPHRWPAEPYGQDPAPDGYQGSQTFHGAPLTVATTGPSVYYSQSPAYNSQYLLRPAANVTPTKGPVYGMNRLPPQQHIYAYSQQMHTPPVQSSSACMFSQEMYGPPLRFESPATGILSPRGDDYFNYNVQQTSTNPPLPEPGYFTKPPLVAHASRSAESKVIEFGKSNFVQPMQGEVIRPPLTTPAHTTQPTPFKFNSNFKSNDGDFTFSSPQVVAQPPSTAYSNSESLLGLLTSDKPLQGDGYSGLKPISGQASGSRNTFSFGSKNTLTENMGPNQQKNFGFHRSDDMFAFHGPGKSVFTTAASELANKSHETDGGSAHGDEEDDGPHFEPVVPLPDKIEVKTGEEDEEEFFCNRAKLFRFDGESKEWKERGIGNVKILRHKTSGKIRLLMRREQVLKICANHYISPDMKLTPNAGSDRSFVWHALDYADELPKPEQLAIRFKTPEEAALFKCKFEEAQNILKALGTNTSTAPNHTLRIVKESATQDNKDICKADGGNLNFEFQIVKKEGPYWNCNSCSFKNAATAKKCVSCQNTNPTSNKELLGPPLVENGFAPKTGLENAQDRFATMTANKEGHWDCSVCLVRNEPTVSRCIACQNTKSASSFVQTSFKFGQGDLPKSVDSDFRSVFSKKEGQWECSVCLVRNERSAKKCVACENPGKQFKEWHCSLCSVKNEAHAIKCVACNNPVTPSLSTAPPSFKFGTSEMSKPFRIGFEGMFAKKEGQWDCSLCFVRNEASATHCIACQYPNKQNQPTSCVSAPASSETSRSPKSGFEGLFPKKEGEWECAVCSVQNESSSLKCVACEASKPTHKPHEAPSAFTVGSKSQSNESAGSQVGTEFKSNFPEKNFKVGISEQKFKFGHVDQEKTPSFAFQGGSNTEFKSIKDGFSFCIPVSADGFKFGIQEKGNQEKKSEKHLENDPSFQAHDTSGQKNGSGVVFGQTSSTFTFADLAKSTSREGFQFGKKDPNFKGFSGAGEKLFSSQSGKVAEKANTSSDLEKDDDAYKTEDSDDIHFEPVVQMPEKVELVTGEEDEKVLYSQRVKLFRFDAEISQWKERGLGNLKILKNEVNGKLRMLMRREQVLKVCANHWITTTMNLKPLSGSDRAWMWLASDFSDGDAKLEQLAAKFKTPELAEEFKQKFEECQRLLLDIPLQTPHKLVDTGRAAKLIQRAEEMKSGLKDFKTFLTNDQVKVTDEENASSGADAPSASDTTAKQNPDNTGPALEWDNYDLREDALDDSVSSSSVHASPLASSPVRKNLFRFGESTTGFNFSFKSALSPSKSPAKLNQSGASVGTDEESDVTQEEERDGQYFEPVVPLPDLVEVSSGEENEQVVFSHRAKLYRYDKDVGQWKERGIGDIKILQNYDNKQVRIVMRRDQVLKLCANHRITPDMTLQTMKGTERVWVWTACDFADGERKIEHLAVRFKLQDVADSFKKIFDEAKTAQEKDSLITPHVSHLSTPRESPCGKIAIAVLEETTRERTDLTQGDEVIDTTSEAGETSSTSETTPKAVVSPPKFVFGSESVKSIFSSEKSKPFAFGNSSATGSLFGFSFNAPLKNSNSEMTSRVQSGSEGKVKPDKCELPQNSDIKQSSDGKVKNLSAFSKENSSTSYTFKTPEKAQEKSKPEDLPSDNDILIVYELTPTPEQKALAEKLLLPSTFFCYKNRPGYVSEEEEDDEDYEMAVKKLNGKLYLDDSEKPLEENLADNDKECVIVWEKKPTVEERAKADTLKLPPTFFCGVCSDTDEDNGNGEDFQSELRKVCEAQKSQNEKVTDRVGIEHIGETEVTNPVGCKSEEPDSDTKHSSSSPVSGTMDKPVDLSTRKETDMEFPSKGENKPVLFGFGSGTGLSFADLASSNSGDFAFGSKDKNFQWANTGAAVFGTQTTSKGGEDEDGSDEDVVHNEDIHFEPIVSLPEVEVKSGEEDEEVLFKERAKLYRWDRDVSQWKERGIGDIKILWHTMKKYYRILMRRDQVFKVCANHVITKAMELKPLNVSNNALVWTASDYADGEAKVEQLAVRFKTKEMTESFKKKFEECQQNIIKLQNGHTSLAAELSKDTNPVVFFDVCADGEPLGRIIMELFSNIVPQTAENFRALCTGEKGFGFKNSIFHRVVPDFICQGGDITKYNGTGGQSIYGDKFDDENFDLKHTGPGLLSMANYGQNTNSSQFFITLKKAEHLDFKHVVFGFVKDGMDTVRKIESFGSPKGSVSRRICITECGQL.

S21 is subject to Phosphoserine. TPR repeat units follow at residues S26–D59, P60–Q93, K94–S128, I165–L201, G288–C319, Q583–I616, and E648–W681. Residues S773–R802 are disordered. Low complexity predominate over residues S778 to P797. T779 bears the Phosphothreonine mark. 3 positions are modified to phosphoserine: S781, S788, and S837. Position 944 is an asymmetric dimethylarginine (R944). A phosphoserine mark is found at S947 and S954. Residues F1000 to G1001 form repeat 1. The tract at residues F1000 to G3035 is 20 X 2 AA repeats of F-G. R1015 is modified (asymmetric dimethylarginine; alternate). R1015 carries the omega-N-methylarginine; alternate modification. T1096 bears the Phosphothreonine mark. Residues F1099–G1100 form repeat 2. Position 1101 is a phosphoserine (S1101). Residues F1117 to G1118 form repeat 3. Phosphothreonine is present on T1138. Residues S1147–P1171 form a disordered region. Residues S1154 and S1243 each carry the phosphoserine modification. In terms of domain architecture, RanBD1 1 spans H1165–A1301. Residue K1344 forms a Glycyl lysine isopeptide (Lys-Gly) (interchain with G-Cter in SUMO2) linkage. Residues K1345–T1375 form a RanBP2-type 1 zinc finger. T1407 carries the phosphothreonine modification. The segment at K1410–A1439 adopts a RanBP2-type 2 zinc-finger fold. A phosphoserine mark is found at S1438, S1441, and S1446. Residues F1449–G1450 form repeat 4. 2 consecutive RanBP2-type zinc fingers follow at residues K1469–Q1498 and N1494–P1527. A Phosphoserine modification is found at S1528. The stretch at F1538–G1539 is repeat 5. K1557 is covalently cross-linked (Glycyl lysine isopeptide (Lys-Gly) (interchain with G-Cter in SUMO1); alternate). K1557 is covalently cross-linked (Glycyl lysine isopeptide (Lys-Gly) (interchain with G-Cter in SUMO2); alternate). The RanBP2-type 5 zinc-finger motif lies at K1558–Q1587. Residues Q1587 to P1606 are compositionally biased toward polar residues. Residues Q1587–G1609 are disordered. K1607 is covalently cross-linked (Glycyl lysine isopeptide (Lys-Gly) (interchain with G-Cter in SUMO2)). K1616 participates in a covalent cross-link: Glycyl lysine isopeptide (Lys-Gly) (interchain with G-Cter in SUMO1); alternate. Residue K1616 forms a Glycyl lysine isopeptide (Lys-Gly) (interchain with G-Cter in SUMO2); alternate linkage. The RanBP2-type 6 zinc finger occupies K1617 to T1646. Positions K1648–E1675 are disordered. A compositionally biased stretch (polar residues) spans T1657–E1675. At S1670 the chain carries Phosphoserine. The stretch at F1696–G1697 is repeat 6. S1706 is modified (phosphoserine). Repeat 7 spans residues F1737–G1738. The span at N1744–N1755 shows a compositional bias: basic and acidic residues. Residues N1744–G1772 form a disordered region. The span at P1757–G1772 shows a compositional bias: polar residues. 2 repeat units span residues F1775–G1776 and F1798–G1799. K1814 is subject to N6-acetyllysine. The segment covering Q1819–S1831 has biased composition (polar residues). The disordered stretch occupies residues Q1819–D1846. T1842 bears the Phosphothreonine mark. S1845 bears the Phosphoserine mark. The RanBD1 2 domain occupies H1849–D1985. K1859 is covalently cross-linked (Glycyl lysine isopeptide (Lys-Gly) (interchain with G-Cter in SUMO2)). Residues L1984–S2124 form an interaction with BICD2 region. T1990 is modified (phosphothreonine). Positions D2030–E2060 are disordered. The segment covering A2034 to A2048 has biased composition (low complexity). Phosphoserine occurs at positions 2083 and 2088. Repeat unit 10 spans residues F2097–G2098. Residues S2107, S2117, and S2127 each carry the phosphoserine modification. Residues A2111–L2121 are compositionally biased toward low complexity. The interval A2111–G2144 is disordered. T2130 is subject to Phosphothreonine. Residues T2130 to R2142 show a composition bias toward acidic residues. At S2134 the chain carries Phosphoserine. Residues Y2146–K2282 form the RanBD1 3 domain. Phosphoserine is present on residues S2299, S2330, and S2348. A disordered region spans residues R2316–S2348. Positions T2328 to T2342 are enriched in low complexity. Copy 11 of the repeat occupies F2354–G2355. K2360 participates in a covalent cross-link: Glycyl lysine isopeptide (Lys-Gly) (interchain with G-Cter in SUMO2). Phosphoserine is present on S2364. A run of 2 repeats spans residues F2373–G2374 and F2383–G2384. Polar residues predominate over residues S2394–S2406. The tract at residues S2394–K2430 is disordered. K2430 is covalently cross-linked (Glycyl lysine isopeptide (Lys-Gly) (interchain with G-Cter in SUMO)). Residue K2432 forms a Glycyl lysine isopeptide (Lys-Gly) (interchain with G-Cter in SUMO1); alternate linkage. A Glycyl lysine isopeptide (Lys-Gly) (interchain with G-Cter in SUMO2); alternate cross-link involves residue K2432. Positions S2443–L2463 are disordered. Residue K2449 forms a Glycyl lysine isopeptide (Lys-Gly) (interchain with G-Cter in SUMO2) linkage. A Phosphothreonine modification is found at T2450. Positions T2450 to D2462 are enriched in basic and acidic residues. Positions D2468–V2472 are interaction with sumoylated RANGAP1. A run of 2 repeats spans residues L2470–N2522 and V2546–C2596. The segment at L2470–N2522 is interaction with UBE2I. Residues L2470–C2545 form a required for E3 SUMO-ligase activity region. The interval L2470 to C2596 is 2 X 50 AA approximate repeats. Y2503 is subject to Phosphotyrosine. 2 positions are modified to phosphoserine: S2505 and S2576. Positions G2523 to C2596 are interaction with SUMO1. T2578 carries the phosphothreonine modification. 2 stretches are compositionally biased toward basic and acidic residues: residues A2598–E2617 and K2627–H2637. A disordered region spans residues A2598–K2666. K2627 is covalently cross-linked (Glycyl lysine isopeptide (Lys-Gly) (interchain with G-Cter in SUMO2)). A Phosphoserine modification is found at S2640. K2649 is covalently cross-linked (Glycyl lysine isopeptide (Lys-Gly) (interchain with G-Cter in SUMO2)). Over residues K2649–K2666 the composition is skewed to basic and acidic residues. Tandem repeats lie at residues F2674–G2675, F2676–G2677, F2697–G2698, and F2714–G2715. S2729 is subject to Phosphoserine. Residues H2740–K2875 form the RanBD1 4 domain. The PPIase cyclophilin-type domain maps to F2896–Q3052. A run of 3 repeats spans residues F2935–G2936, F3018–G3019, and F3034–G3035. S3036 carries the post-translational modification Phosphoserine.

The protein belongs to the RanBP2 E3 ligase family. Part of the nuclear pore complex. Forms a complex with NXT1, NXF1 and RANGAP1. Forms a tight complex with RANBP1 and UBE2I. Interacts with SUMO1 but not SUMO2. Interacts with sumoylated RANGAP1. Interacts with CDCA8. Interacts with PML. Interacts with BICD2. Interacts with PRKN. Interacts with MCM3AP. Interacts with COX11. Interacts with synaptic plasticity regulator PANTS. In terms of processing, polyubiquitinated by PRKN, which leads to proteasomal degradation. The inner channel of the NPC has a different redox environment from the cytoplasm and allows the formation of interchain disulfide bonds between some nucleoporins, the significant increase of these linkages upon oxidative stress reduces the permeability of the NPC.

The protein localises to the nucleus. It is found in the nucleus membrane. Its subcellular location is the nuclear pore complex. The protein resides in the nucleus envelope. It functions in the pathway protein modification; protein sumoylation. Functionally, E3 SUMO-protein ligase which facilitates SUMO1 and SUMO2 conjugation by UBE2I. Involved in transport factor (Ran-GTP, karyopherin)-mediated protein import via the F-G repeat-containing domain which acts as a docking site for substrates. Binds single-stranded RNA (in vitro). May bind DNA. Component of the nuclear export pathway. Specific docking site for the nuclear export factor exportin-1. Inhibits EIF4E-dependent mRNA export. Sumoylates PML at 'Lys-490' which is essential for the proper assembly of PML-NB. Recruits BICD2 to the nuclear envelope and cytoplasmic stacks of nuclear pore complex known as annulate lamellae during G2 phase of cell cycle. Probable inactive PPIase with no peptidyl-prolyl cis-trans isomerase activity. In Mus musculus (Mouse), this protein is E3 SUMO-protein ligase RanBP2 (Ranbp2).